Here is a 449-residue protein sequence, read N- to C-terminus: Ribosomal protein uS12 methylthiotransferase RimO (449 aa).

Positions 7 to 123 constitute an MTTase N-terminal domain; sequence QKVSMVSLGC…VAEILAEHHA (117 aa). Residues C16, C52, C86, C161, C165, and C168 each coordinate [4Fe-4S] cluster. The 231-residue stretch at 147 to 377 folds into the Radical SAM core domain; it reads SSPGWYAYLK…MKTQARVSFR (231 aa). One can recognise a TRAM domain in the interval 380–448; that stretch reads RAMVGQTEQV…DYDLVAEMIE (69 aa).

It belongs to the methylthiotransferase family. RimO subfamily. [4Fe-4S] cluster serves as cofactor.

The protein resides in the cytoplasm. It catalyses the reaction L-aspartate(89)-[ribosomal protein uS12]-hydrogen + (sulfur carrier)-SH + AH2 + 2 S-adenosyl-L-methionine = 3-methylsulfanyl-L-aspartate(89)-[ribosomal protein uS12]-hydrogen + (sulfur carrier)-H + 5'-deoxyadenosine + L-methionine + A + S-adenosyl-L-homocysteine + 2 H(+). Its function is as follows. Catalyzes the methylthiolation of an aspartic acid residue of ribosomal protein uS12. The protein is Ribosomal protein uS12 methylthiotransferase RimO of Trichlorobacter lovleyi (strain ATCC BAA-1151 / DSM 17278 / SZ) (Geobacter lovleyi).